A 336-amino-acid polypeptide reads, in one-letter code: Ketol-acid reductoisomerase (NADP(+)) (336 aa).

The KARI N-terminal Rossmann domain maps to 1–181 (MKVYYDQDAD…GGGRSGIIET (181 aa)). NADP(+) contacts are provided by residues 24–27 (YGSQ), R47, S50, and S52. Residue H107 is part of the active site. G133 is an NADP(+) binding site. One can recognise a KARI C-terminal knotted domain in the interval 182–327 (SFREETETDL…ERLRGMMPWI (146 aa)). The Mg(2+) site is built by D190, E194, E226, and E230. S251 provides a ligand contact to substrate.

Belongs to the ketol-acid reductoisomerase family. It depends on Mg(2+) as a cofactor.

It catalyses the reaction (2R)-2,3-dihydroxy-3-methylbutanoate + NADP(+) = (2S)-2-acetolactate + NADPH + H(+). The enzyme catalyses (2R,3R)-2,3-dihydroxy-3-methylpentanoate + NADP(+) = (S)-2-ethyl-2-hydroxy-3-oxobutanoate + NADPH + H(+). Its pathway is amino-acid biosynthesis; L-isoleucine biosynthesis; L-isoleucine from 2-oxobutanoate: step 2/4. It functions in the pathway amino-acid biosynthesis; L-valine biosynthesis; L-valine from pyruvate: step 2/4. Involved in the biosynthesis of branched-chain amino acids (BCAA). Catalyzes an alkyl-migration followed by a ketol-acid reduction of (S)-2-acetolactate (S2AL) to yield (R)-2,3-dihydroxy-isovalerate. In the isomerase reaction, S2AL is rearranged via a Mg-dependent methyl migration to produce 3-hydroxy-3-methyl-2-ketobutyrate (HMKB). In the reductase reaction, this 2-ketoacid undergoes a metal-dependent reduction by NADPH to yield (R)-2,3-dihydroxy-isovalerate. The chain is Ketol-acid reductoisomerase (NADP(+)) from Halorhodospira halophila (strain DSM 244 / SL1) (Ectothiorhodospira halophila (strain DSM 244 / SL1)).